Here is a 361-residue protein sequence, read N- to C-terminus: RLA class I histocompatibility antigen, alpha chain 19-1 (361 aa).

An N-terminal signal peptide occupies residues 1–24 (MGSIPPRTLLLLLAGALTLKDTQA). The alpha-1 stretch occupies residues 25 to 114 (GSHSMRYFYT…ALRYYNQSAA (90 aa)). Residues 25 to 308 (GSHSMRYFYT…EPPAQPTALI (284 aa)) are Extracellular-facing. An N-linked (GlcNAc...) asparagine glycan is attached at Asn-110. Residues 115-206 (GSHTFQTMFG…EMGKETLQRA (92 aa)) are alpha-2. 2 disulfides stabilise this stretch: Cys-125–Cys-188 and Cys-227–Cys-283. Residues 207–298 (DPPKAHVTHH…GLPEPLTLTW (92 aa)) are alpha-3. Positions 209 to 297 (PKAHVTHHPA…EGLPEPLTLT (89 aa)) constitute an Ig-like C1-type domain. The tract at residues 299–308 (EPPAQPTALI) is connecting peptide. Residues 309–329 (VGIVAGVLGVLLILGAVVAVV) form a helical membrane-spanning segment. Topologically, residues 330–361 (RRKKHSSDGKGGRYTPAAGGHRDQGSDDSLMP) are cytoplasmic. The disordered stretch occupies residues 335–361 (SSDGKGGRYTPAAGGHRDQGSDDSLMP). Phosphoserine is present on residues Ser-355 and Ser-358.

Belongs to the MHC class I family. Heterodimer of an alpha chain and a beta chain (beta-2-microglobulin).

The protein localises to the membrane. Involved in the presentation of foreign antigens to the immune system. The polypeptide is RLA class I histocompatibility antigen, alpha chain 19-1 (Oryctolagus cuniculus (Rabbit)).